Consider the following 439-residue polypeptide: MSVSQELFDRARRVMPGGVNSPVRAFNSVGGTPPFIAAAKGPYLTDVDGREYVDLVCSWGPALIGHAHPVVTEAVHEAVERGLGFGATTRGETELAELVVDRVAPLEEIRMVSTGTEATMTALRLARGYTGRDLVVKFAGCYHGHVDSLLSEAGSGLATLALPGSAGVTEATAAQTLVLPYNDVAALEAAFAEHPGRIAAVITEAAPCNMGVVTPQDGFNAAIRRITQADGALMILDEVLTGFRVHEAGYWGLSNAAGESWAPDLFTFGKVIGGGLPTAALGGRREVMEYLAPTGPVYQAGTLSGNPVAMAAGLATLKCADAVAYQTIDRRSEQLRAGLREALDAAGVDYSIQEVGSLFSLAFGTRSTGVHDYADAKGQEAFRYTPFFHAMLDAGVYLPPSVFEAWFLSAAHDDSAMDRILSALPAAARAAAEAQPPQP.

The residue at position 270 (lysine 270) is an N6-(pyridoxal phosphate)lysine.

The protein belongs to the class-III pyridoxal-phosphate-dependent aminotransferase family. HemL subfamily. In terms of assembly, homodimer. It depends on pyridoxal 5'-phosphate as a cofactor.

The protein resides in the cytoplasm. The catalysed reaction is (S)-4-amino-5-oxopentanoate = 5-aminolevulinate. It functions in the pathway porphyrin-containing compound metabolism; protoporphyrin-IX biosynthesis; 5-aminolevulinate from L-glutamyl-tRNA(Glu): step 2/2. This Kocuria rhizophila (strain ATCC 9341 / DSM 348 / NBRC 103217 / DC2201) protein is Glutamate-1-semialdehyde 2,1-aminomutase.